The chain runs to 269 residues: Histidinol-phosphatase (269 aa).

Belongs to the PHP hydrolase family. HisK subfamily.

It catalyses the reaction L-histidinol phosphate + H2O = L-histidinol + phosphate. The protein operates within amino-acid biosynthesis; L-histidine biosynthesis; L-histidine from 5-phospho-alpha-D-ribose 1-diphosphate: step 8/9. The protein is Histidinol-phosphatase (hisK) of Lactococcus lactis subsp. lactis (strain IL1403) (Streptococcus lactis).